Reading from the N-terminus, the 365-residue chain is Ferredoxin--NADP reductase, chloroplastic (365 aa).

Residues 1–22 (MAAAVTAAVSFPSTKSTPLSTR) are disordered. The segment covering 11–22 (FPSTKSTPLSTR) has biased composition (polar residues). The FAD-binding FR-type domain occupies 86-208 (KNPYTGRCLL…TGPVGKEMLM (123 aa)). Residues 144–147 (RLYS), 165–167 (CVK), tyrosine 171, 182–184 (VCS), and threonine 223 contribute to the FAD site. NADP(+) contacts are provided by serine 147 and lysine 167. NADP(+) is bound by residues threonine 223, 255–256 (VP), 285–286 (SR), lysine 295, 324–325 (GL), and glutamate 363.

Belongs to the ferredoxin--NADP reductase type 1 family. FAD is required as a cofactor.

It is found in the plastid. Its subcellular location is the chloroplast stroma. The protein resides in the chloroplast thylakoid membrane. It carries out the reaction 2 reduced [2Fe-2S]-[ferredoxin] + NADP(+) + H(+) = 2 oxidized [2Fe-2S]-[ferredoxin] + NADPH. The protein operates within energy metabolism; photosynthesis. May play a key role in regulating the relative amounts of cyclic and non-cyclic electron flow to meet the demands of the plant for ATP and reducing power. This is Ferredoxin--NADP reductase, chloroplastic (PETH) from Mesembryanthemum crystallinum (Common ice plant).